Reading from the N-terminus, the 985-residue chain is Probable oxidoreductase YjgC (985 aa).

A 2Fe-2S ferredoxin-type domain is found at 3–79 (GKKTITINGV…GDVIDTLSPD (77 aa)). [2Fe-2S] cluster-binding residues include C37, C48, C51, and C63. A 4Fe-4S His(Cys)3-ligated-type domain is found at 79 to 119 (DVKKAQVIGMDKILYNHELYCTVCDYNNGGCEIHNTVKEMK). [4Fe-4S] cluster is bound by residues H95, C99, C102, C109, C148, C151, C154, C158, C191, C194, C197, C201, C265, C268, C272, and C300. 2 consecutive 4Fe-4S ferredoxin-type domains span residues 139–170 (PFYR…LTID) and 182–211 (NDVP…EKGM). The 57-residue stretch at 258-314 (IKKTKTVCTYCGVGCSFDVWTKGRDILKVEPQEEAPANGISTCVKGKFGWDFVNSEE) folds into the 4Fe-4S Mo/W bis-MGD-type domain.

In the C-terminal section; belongs to the prokaryotic molybdopterin-containing oxidoreductase family. [2Fe-2S] cluster is required as a cofactor. It depends on [4Fe-4S] cluster as a cofactor. Requires Mo-bis(molybdopterin guanine dinucleotide) as cofactor.

This Bacillus subtilis (strain 168) protein is Probable oxidoreductase YjgC (yjgC).